The primary structure comprises 88 residues: Fe-S protein maturation auxiliary factor SufT (88 aa).

This sequence belongs to the MIP18 family.

Its function is as follows. Involved in the maturation of iron-sulfur (Fe-S) proteins. May function as a Fe-S cluster carrier. Is required for S.aureus growth under conditions that impose a high demand for lipoic acid, likely via a role in the maturation of the lipoate synthase LipA. Is non-essential for growth in conditions that impose a low demand for lipoic acid or Fe-S clusters, such as fermentative growth. Also seems to be involved in the maturation of AcnA, LeuCD and IlvD proteins, that utilize Fe-S cluster cofactors, and its role increases under conditions of high-demand for Fe-S clusters (respiratory growth). Is not involved in the repair of Fe-S clusters damaged by reactive oxygen species or in the physical protection of Fe-S clusters from oxidants. Displays synergy with the Fe-S cluster carrier Nfu. This chain is Fe-S protein maturation auxiliary factor SufT, found in Staphylococcus aureus (strain USA300).